The following is a 1198-amino-acid chain: Tetratricopeptide repeat protein 17 (1198 aa).

The TPR 1 repeat unit spans residues 313-346 (LTSHYTLGNIYAMLGEYNHSVLCYEQALQAQPGF). The stretch at 358–399 (CQQKLEQRLEAQHRSLQRTLNELKEYQKQHDHYLRQQEMLDK) forms a coiled coil. TPR repeat units follow at residues 630–663 (WMMQNEAGLFWRAKGNGTQALVCLRQALHSAPPQ) and 700–733 (PHTLLSLVNVHLSQGNLTGALAVFRQALSLSVHC). Disordered regions lie at residues 771–792 (DSELEDWDTGSSSSGRQEVWDS) and 814–839 (NGSGEASGQDRTREPKAEGGEEEEQD). The span at 821 to 832 (GQDRTREPKAEG) shows a compositional bias: basic and acidic residues. 3 TPR repeats span residues 1071–1105 (SWVLSSMAALYWRVKGQGKRAIDCLRQALNYAPHH), 1108–1141 (DVPLISLANIFQNARLWEDALTVARMAVEIAPHF), and 1142–1175 (VVNHFTLANVYIAMEEFEKAMHWYESTLKLQPEF).

Belongs to the TTC17 family.

It is found in the cytoplasm. The protein resides in the cell membrane. Its subcellular location is the cytoskeleton. In terms of biological role, plays a role in primary ciliogenesis by modulating actin polymerization. In Danio rerio (Zebrafish), this protein is Tetratricopeptide repeat protein 17 (ttc17).